The following is a 368-amino-acid chain: Glutamate 5-kinase (368 aa).

An ATP-binding site is contributed by Lys-13. Substrate is bound by residues Ser-54, Asp-141, and Asn-153. An ATP-binding site is contributed by 173–174 (SD). A PUA domain is found at 278–355 (RGEITVDAGA…AEIEAVLGYP (78 aa)).

It belongs to the glutamate 5-kinase family.

It is found in the cytoplasm. It catalyses the reaction L-glutamate + ATP = L-glutamyl 5-phosphate + ADP. Its pathway is amino-acid biosynthesis; L-proline biosynthesis; L-glutamate 5-semialdehyde from L-glutamate: step 1/2. In terms of biological role, catalyzes the transfer of a phosphate group to glutamate to form L-glutamate 5-phosphate. The polypeptide is Glutamate 5-kinase (Dinoroseobacter shibae (strain DSM 16493 / NCIMB 14021 / DFL 12)).